Here is a 313-residue protein sequence, read N- to C-terminus: Biotin synthase (313 aa).

The Radical SAM core domain occupies 38-262 (REVQISTLLS…TMPHARVRLS (225 aa)). [4Fe-4S] cluster-binding residues include cysteine 53, cysteine 57, and cysteine 60. [2Fe-2S] cluster contacts are provided by cysteine 97, cysteine 128, cysteine 188, and arginine 260.

Belongs to the radical SAM superfamily. Biotin synthase family. Homodimer. It depends on [4Fe-4S] cluster as a cofactor. [2Fe-2S] cluster serves as cofactor.

It catalyses the reaction (4R,5S)-dethiobiotin + (sulfur carrier)-SH + 2 reduced [2Fe-2S]-[ferredoxin] + 2 S-adenosyl-L-methionine = (sulfur carrier)-H + biotin + 2 5'-deoxyadenosine + 2 L-methionine + 2 oxidized [2Fe-2S]-[ferredoxin]. Its pathway is cofactor biosynthesis; biotin biosynthesis; biotin from 7,8-diaminononanoate: step 2/2. In terms of biological role, catalyzes the conversion of dethiobiotin (DTB) to biotin by the insertion of a sulfur atom into dethiobiotin via a radical-based mechanism. This is Biotin synthase from Granulibacter bethesdensis (strain ATCC BAA-1260 / CGDNIH1).